A 248-amino-acid polypeptide reads, in one-letter code: Ribosomal RNA small subunit methyltransferase J (248 aa).

S-adenosyl-L-methionine contacts are provided by residues 98–99 (RD), 114–115 (ER), 150–151 (SS), and D168.

This sequence belongs to the methyltransferase superfamily. RsmJ family.

Its subcellular location is the cytoplasm. The catalysed reaction is guanosine(1516) in 16S rRNA + S-adenosyl-L-methionine = N(2)-methylguanosine(1516) in 16S rRNA + S-adenosyl-L-homocysteine + H(+). Specifically methylates the guanosine in position 1516 of 16S rRNA. The sequence is that of Ribosomal RNA small subunit methyltransferase J from Shewanella baltica (strain OS185).